A 634-amino-acid polypeptide reads, in one-letter code: Ankyrin repeat protein OPG025 (634 aa).

ANK repeat units follow at residues 36 to 69 (DGET…YKNI), 70 to 100 (NDFD…EINS), 103 to 134 (NGIN…PTCS), 175 to 211 (MGKT…EMRY), 307 to 337 (IQDL…TLYR), and 412 to 441 (HGCS…DINI).

The protein belongs to the orthopoxvirus OPG025 family. Interacts with components of host SCF complex CUL1 and SKP1 and components of the cullin deneddylation/COP9 signalosome complex subunits COPS7A and COPS7B.

In terms of biological role, plays a role in the inhibition of host immune repsonse by counteracting the action of interferons on early events in the viral replication cycle. This chain is Ankyrin repeat protein OPG025 (OPG035), found in Vaccinia virus (strain Western Reserve) (VACV).